The following is a 279-amino-acid chain: Energy-coupling factor transporter ATP-binding protein EcfA1 (279 aa).

The region spanning 5–240 is the ABC transporter domain; the sequence is IELKKVTFNY…GDELLQLGLD (236 aa). ATP is bound at residue 40-47; sequence GHNGSGKS.

It belongs to the ABC transporter superfamily. Energy-coupling factor EcfA family. As to quaternary structure, forms a stable energy-coupling factor (ECF) transporter complex composed of 2 membrane-embedded substrate-binding proteins (S component), 2 ATP-binding proteins (A component) and 2 transmembrane proteins (T component).

It localises to the cell membrane. In terms of biological role, ATP-binding (A) component of a common energy-coupling factor (ECF) ABC-transporter complex. Unlike classic ABC transporters this ECF transporter provides the energy necessary to transport a number of different substrates. The chain is Energy-coupling factor transporter ATP-binding protein EcfA1 from Streptococcus pyogenes serotype M5 (strain Manfredo).